The primary structure comprises 276 residues: Secreted RxLR effector protein 120 (276 aa).

An N-terminal signal peptide occupies residues 1–21 (MRGAYYVITALLVVASSQTSA). The short motif at 48-65 (QSLRGSRDVPDDLAHEER) is the RxLR-dEER element. Residues 97–130 (GKRPRVAEKDALEKASGADEASKKPRNTATDDAF) are disordered. Over residues 101 to 119 (RVAEKDALEKASGADEASK) the composition is skewed to basic and acidic residues.

This sequence belongs to the RxLR effector family.

Its subcellular location is the secreted. It localises to the host nucleus. In terms of biological role, secreted effector that completely suppresses the host cell death induced by cell death-inducing proteins. This Plasmopara viticola (Downy mildew of grapevine) protein is Secreted RxLR effector protein 120.